The primary structure comprises 55 residues: uncharacterized protein (55 aa).

This is an uncharacterized protein from Salmonella typhimurium (strain LT2 / SGSC1412 / ATCC 700720).